The primary structure comprises 261 residues: Cytochrome c oxidase subunit 3 (261 aa).

Topologically, residues 1–15 (MTHQTHAYHMVNPSP) are mitochondrial matrix. The chain crosses the membrane as a helical span at residues 16–34 (WPLTGALSALLMSSGLTMW). The Mitochondrial intermembrane portion of the chain corresponds to 35 to 40 (FHFNSL). Residues 41-66 (ILLTTGLVTNILTMYQWWRDVIREST) form a helical membrane-spanning segment. Residues 67–72 (FQGHHT) lie on the Mitochondrial matrix side of the membrane. A helical membrane pass occupies residues 73-105 (PVVQKGLRYGMVLFIISEVLFFTGFFWAFYHSS). Residues 106-128 (LAPTPELGGCWPPTGINPLNPLE) are Mitochondrial intermembrane-facing. A helical transmembrane segment spans residues 129-152 (VPLLNTSVLLASGVSITWAHHSLM). The Mitochondrial matrix segment spans residues 153-155 (EGN). A helical membrane pass occupies residues 156 to 183 (RKQMLQALFITIALGVYFTLLQASEYHE). Residues 184–190 (ASFTISD) are Mitochondrial intermembrane-facing. A helical transmembrane segment spans residues 191–223 (GVYGSTFFVATGFHGLHVIIGSTFLIVCFLRQL). Topologically, residues 224 to 232 (KFHFTSDHH) are mitochondrial matrix. A helical membrane pass occupies residues 233 to 256 (FGFEAAAWYWHFVDVVWLFLYVSI). The Mitochondrial intermembrane segment spans residues 257-261 (YWWGS).

Belongs to the cytochrome c oxidase subunit 3 family. As to quaternary structure, component of the cytochrome c oxidase (complex IV, CIV), a multisubunit enzyme composed of 14 subunits. The complex is composed of a catalytic core of 3 subunits MT-CO1, MT-CO2 and MT-CO3, encoded in the mitochondrial DNA, and 11 supernumerary subunits COX4I, COX5A, COX5B, COX6A, COX6B, COX6C, COX7A, COX7B, COX7C, COX8 and NDUFA4, which are encoded in the nuclear genome. The complex exists as a monomer or a dimer and forms supercomplexes (SCs) in the inner mitochondrial membrane with NADH-ubiquinone oxidoreductase (complex I, CI) and ubiquinol-cytochrome c oxidoreductase (cytochrome b-c1 complex, complex III, CIII), resulting in different assemblies (supercomplex SCI(1)III(2)IV(1) and megacomplex MCI(2)III(2)IV(2)).

It is found in the mitochondrion inner membrane. It catalyses the reaction 4 Fe(II)-[cytochrome c] + O2 + 8 H(+)(in) = 4 Fe(III)-[cytochrome c] + 2 H2O + 4 H(+)(out). Its function is as follows. Component of the cytochrome c oxidase, the last enzyme in the mitochondrial electron transport chain which drives oxidative phosphorylation. The respiratory chain contains 3 multisubunit complexes succinate dehydrogenase (complex II, CII), ubiquinol-cytochrome c oxidoreductase (cytochrome b-c1 complex, complex III, CIII) and cytochrome c oxidase (complex IV, CIV), that cooperate to transfer electrons derived from NADH and succinate to molecular oxygen, creating an electrochemical gradient over the inner membrane that drives transmembrane transport and the ATP synthase. Cytochrome c oxidase is the component of the respiratory chain that catalyzes the reduction of oxygen to water. Electrons originating from reduced cytochrome c in the intermembrane space (IMS) are transferred via the dinuclear copper A center (CU(A)) of subunit 2 and heme A of subunit 1 to the active site in subunit 1, a binuclear center (BNC) formed by heme A3 and copper B (CU(B)). The BNC reduces molecular oxygen to 2 water molecules using 4 electrons from cytochrome c in the IMS and 4 protons from the mitochondrial matrix. The protein is Cytochrome c oxidase subunit 3 (MT-CO3) of Hippopotamus amphibius (Hippopotamus).